Reading from the N-terminus, the 66-residue chain is Conotoxin Cal6.38 (66 aa).

The N-terminal stretch at 1 to 22 (MKLTFVLIVAVLVLAVCNFTVA) is a signal peptide. Cystine bridges form between cysteine 38/cysteine 55, cysteine 45/cysteine 59, and cysteine 54/cysteine 64.

Belongs to the conotoxin O1 superfamily. As to expression, expressed by the venom duct.

Its subcellular location is the secreted. Functionally, probable neurotoxin. The polypeptide is Conotoxin Cal6.38 (Californiconus californicus (California cone)).